We begin with the raw amino-acid sequence, 430 residues long: Transcobalamin-2 (430 aa).

The signal sequence occupies residues methionine 1–alanine 18. Intrachain disulfides connect cysteine 21–cysteine 270, cysteine 116–cysteine 312, and cysteine 165–cysteine 208. Cob(II)alamin is bound by residues threonine 152–glutamine 156, histidine 193, histidine 193–aspartate 197, asparagine 245, serine 248, glutamine 294, and tryptophan 398–leucine 400.

Belongs to the eukaryotic cobalamin transport proteins family. Interacts with CD320 (via LDL-receptor class A domains).

The protein localises to the secreted. Its function is as follows. Primary vitamin B12-binding and transport protein. Delivers cobalamin to cells. The polypeptide is Transcobalamin-2 (Tcn2) (Mus musculus (Mouse)).